Consider the following 331-residue polypeptide: MKIILNKIYQGDTLNISETYTLFKSIMLKKINNIELSAILIALKIRGESQNEILGAVKACLEHMITFPKPTYMFSDIVGTGGDNSNSINISTTSALVGSACGFKIAKHCNGNISSKTGSADILKKFGINIQISPEKSKKMLDELNICFLFAPQYHINFKVVTQVRKILRIKTIFNIIAPLLNPAMPKLTVMGVCNFKLMLPIAQVLKTLNYHHAIIVCSDNIDEVTLHSFTKIIELKNNNITSYILHPDDFGVKYCHKNDILGGNTEENYNIIKKILQGKGPSAVTETIAVNVAILFKIFGYSNLKKNTEYALKVIRSGKVYEKIIQLSKF.

Residues G79, 82 to 83 (GD), S87, 89 to 92 (NIST), 107 to 115 (KHCNGNISS), and S119 contribute to the 5-phospho-alpha-D-ribose 1-diphosphate site. G79 provides a ligand contact to anthranilate. S91 serves as a coordination point for Mg(2+). Residue N110 coordinates anthranilate. R165 serves as a coordination point for anthranilate. Residues D223 and E224 each contribute to the Mg(2+) site.

The protein belongs to the anthranilate phosphoribosyltransferase family. Homodimer. Mg(2+) is required as a cofactor.

It catalyses the reaction N-(5-phospho-beta-D-ribosyl)anthranilate + diphosphate = 5-phospho-alpha-D-ribose 1-diphosphate + anthranilate. Its pathway is amino-acid biosynthesis; L-tryptophan biosynthesis; L-tryptophan from chorismate: step 2/5. Its function is as follows. Catalyzes the transfer of the phosphoribosyl group of 5-phosphorylribose-1-pyrophosphate (PRPP) to anthranilate to yield N-(5'-phosphoribosyl)-anthranilate (PRA). This chain is Anthranilate phosphoribosyltransferase, found in Buchnera aphidicola subsp. Baizongia pistaciae (strain Bp).